A 99-amino-acid polypeptide reads, in one-letter code: Thylakoid membrane protein ssl2009 (99 aa).

Residues 10 to 30 traverse the membrane as a helical segment; the sequence is GFLLGTVIGGVVGGILGSVLA. Positions 50 to 84 form a coiled coil; sequence NLDSEENIELARRRLEDKIAQLNLVIDDVRDQLGH.

It is found in the cellular thylakoid membrane. This Synechocystis sp. (strain ATCC 27184 / PCC 6803 / Kazusa) protein is Thylakoid membrane protein ssl2009.